The following is a 353-amino-acid chain: Uroporphyrinogen decarboxylase (353 aa).

Residues 27–31, Phe-46, Asp-76, Tyr-152, Ser-207, and His-321 contribute to the substrate site; that span reads RQAGR.

This sequence belongs to the uroporphyrinogen decarboxylase family. As to quaternary structure, homodimer.

It is found in the cytoplasm. The catalysed reaction is uroporphyrinogen III + 4 H(+) = coproporphyrinogen III + 4 CO2. It functions in the pathway porphyrin-containing compound metabolism; protoporphyrin-IX biosynthesis; coproporphyrinogen-III from 5-aminolevulinate: step 4/4. In terms of biological role, catalyzes the decarboxylation of four acetate groups of uroporphyrinogen-III to yield coproporphyrinogen-III. The protein is Uroporphyrinogen decarboxylase of Listeria monocytogenes serovar 1/2a (strain ATCC BAA-679 / EGD-e).